The following is a 277-amino-acid chain: Short chain dehydrogenase penD (277 aa).

NADP(+)-binding residues include Ile28, Asp76, and Asn105. Catalysis depends on proton donor residues Ser158 and Ser159. NADP(+) contacts are provided by Tyr173, Lys177, and Thr209. Tyr173 serves as the catalytic Proton acceptor. Lys177 acts as the Lowers pKa of active site Tyr in catalysis.

Belongs to the short-chain dehydrogenases/reductases (SDR) family.

The catalysed reaction is yaequinolone D + NADPH + H(+) = penigequinolone A + NADP(+) + H2O. It carries out the reaction yaequinolone D + NADPH + H(+) = penigequinolone B + NADP(+) + H2O. The protein operates within secondary metabolite biosynthesis. It participates in alkaloid biosynthesis. It functions in the pathway mycotoxin biosynthesis. Functionally, short chain dehydrogenase; part of the gene cluster that mediates the biosynthesis of penigequinolones, potent insecticidal alkaloids that contain a highly modified 10-carbon prenyl group. The first stage is catalyzed by the nonribosomal peptide synthetase penN that condenses anthranilic acid and O-methyl-L-tyrosine to produce 4'-methoxycyclopeptin. 4'-methoxycyclopeptin is then converted to 4'-methoxydehydrocyclopeptin by the ketoglutarate-dependent dioxygenase penM through dehydrogenation to form a double bond between C-alpha and C-beta of the O-methyltyrosine side chain. PenM also converts its first product methoxydehydrocyclopeptin to 4'-methoxycyclopenin. The following conversion of 4'methoxycyclopenin into 4'-methoxyviridicatin is catalyzed by the cyclopenase penL. 4'-methoxyviridicatin is the precursor of quinolone natural products, and is further converted to quinolinone B. The prenyltransferase penI then catalyzes the canonical Friedel-Crafts alkylation of quinolinone B with dimethylallyl cation to yield dimethylallyl quinolone, which is subjected to FAD-dependent dehydrogenation by the FAD-linked oxidoreductase penH to yield conjugated aryl diene. The delta(3') double bond then serves as the site of the second alkylation with DMAPP catalyzed by the prenyltransferase penG to yield a carbenium ion intermediate, which can be attacked by H(2)O to yield a styrenyl quinolone containing a C3'-hydroxyprenyl chain, or undergo cyclization to yield yaequinolones J1 and J2. The conversion of the styrenyl quinolone into the tetrahydrofuran-containing yaequinolone C is performed by the FAD-dependent monooxygenase penE and involves epoxidation of the terminal C7'-C8' olefin, followed by epoxide ring opening initiated by the C3' hydroxyl group. The predicted cysteine hydrolase penJ acts as an epoxide hydrolase that enhances the rate of the 5-exo-tet cyclization step, increasing the yield of yaequinolone C. PenF catalyzes the cationic rearrangement of the epoxide formed by penE (before ring opening to produce yaequinolone C) into yaequinolone D. Finally, the short-chain dehydrogenase/reductase (SDR)-like reductase penD, catalyzes both the dehydration of yaequinolone D and the reduction of the resulting oxonium to yield penigequinolone. The chain is Short chain dehydrogenase penD from Penicillium thymicola.